Consider the following 184-residue polypeptide: GTP cyclohydrolase 1 (184 aa).

Zn(2+) is bound by residues Cys-75, His-78, and Cys-146.

This sequence belongs to the GTP cyclohydrolase I family. Toroid-shaped homodecamer, composed of two pentamers of five dimers.

It carries out the reaction GTP + H2O = 7,8-dihydroneopterin 3'-triphosphate + formate + H(+). It functions in the pathway cofactor biosynthesis; 7,8-dihydroneopterin triphosphate biosynthesis; 7,8-dihydroneopterin triphosphate from GTP: step 1/1. This Streptococcus sanguinis (strain SK36) protein is GTP cyclohydrolase 1.